The chain runs to 149 residues: D-aminoacyl-tRNA deacylase (149 aa).

The short motif at 137–138 (GP) is the Gly-cisPro motif, important for rejection of L-amino acids element.

It belongs to the DTD family. Homodimer.

It localises to the cytoplasm. The enzyme catalyses glycyl-tRNA(Ala) + H2O = tRNA(Ala) + glycine + H(+). The catalysed reaction is a D-aminoacyl-tRNA + H2O = a tRNA + a D-alpha-amino acid + H(+). In terms of biological role, an aminoacyl-tRNA editing enzyme that deacylates mischarged D-aminoacyl-tRNAs. Also deacylates mischarged glycyl-tRNA(Ala), protecting cells against glycine mischarging by AlaRS. Acts via tRNA-based rather than protein-based catalysis; rejects L-amino acids rather than detecting D-amino acids in the active site. By recycling D-aminoacyl-tRNA to D-amino acids and free tRNA molecules, this enzyme counteracts the toxicity associated with the formation of D-aminoacyl-tRNA entities in vivo and helps enforce protein L-homochirality. The protein is D-aminoacyl-tRNA deacylase of Clostridium botulinum (strain Loch Maree / Type A3).